The sequence spans 258 residues: Phosphate import ATP-binding protein PstB (258 aa).

An ABC transporter domain is found at 13–253 (ITVENLNLWY…PREKSTEDYI (241 aa)). 45-52 (GPSGCGKS) contacts ATP.

Belongs to the ABC transporter superfamily. Phosphate importer (TC 3.A.1.7) family. As to quaternary structure, the complex is composed of two ATP-binding proteins (PstB), two transmembrane proteins (PstC and PstA) and a solute-binding protein (PstS).

It is found in the cell membrane. The catalysed reaction is phosphate(out) + ATP + H2O = ADP + 2 phosphate(in) + H(+). Its function is as follows. Part of the ABC transporter complex PstSACB involved in phosphate import. Responsible for energy coupling to the transport system. This is Phosphate import ATP-binding protein PstB from Methanosarcina mazei (strain ATCC BAA-159 / DSM 3647 / Goe1 / Go1 / JCM 11833 / OCM 88) (Methanosarcina frisia).